The chain runs to 77 residues: UPF0401 protein ECP_3010 (77 aa).

This sequence belongs to the UPF0401 family.

The protein is UPF0401 protein ECP_3010 of Escherichia coli O6:K15:H31 (strain 536 / UPEC).